The primary structure comprises 251 residues: Triosephosphate isomerase (251 aa).

9–11 (NWK) lines the substrate pocket. Histidine 96 functions as the Electrophile in the catalytic mechanism. The active-site Proton acceptor is the glutamate 167. Substrate is bound by residues glycine 173, serine 213, and 234–235 (GG).

The protein belongs to the triosephosphate isomerase family. As to quaternary structure, homodimer.

The protein resides in the cytoplasm. The catalysed reaction is D-glyceraldehyde 3-phosphate = dihydroxyacetone phosphate. The protein operates within carbohydrate biosynthesis; gluconeogenesis. Its pathway is carbohydrate degradation; glycolysis; D-glyceraldehyde 3-phosphate from glycerone phosphate: step 1/1. Functionally, involved in the gluconeogenesis. Catalyzes stereospecifically the conversion of dihydroxyacetone phosphate (DHAP) to D-glyceraldehyde-3-phosphate (G3P). This chain is Triosephosphate isomerase, found in Bacteroides fragilis (strain ATCC 25285 / DSM 2151 / CCUG 4856 / JCM 11019 / LMG 10263 / NCTC 9343 / Onslow / VPI 2553 / EN-2).